The sequence spans 1011 residues: CRM-domain containing factor CFM2, chloroplastic (1011 aa).

A chloroplast-targeting transit peptide spans 1 to 45 (MLLPLFHQQPLILAKTFPDRIFPPFLVPNTLVSRRNVSRANSGIF). The span at 77 to 90 (HDSPTRRITGEESG) shows a compositional bias: basic and acidic residues. The tract at residues 77–96 (HDSPTRRITGEESGKNSPGE) is disordered. CRM domains follow at residues 164 to 260 (LTLP…YFVS), 376 to 473 (PKLT…AVSS), and 577 to 677 (EGIT…QCLR). 2 disordered regions span residues 721–810 (DSAT…GNSL) and 841–872 (LNAN…DGLV). The span at 722–736 (SATNETWSDGESSNM) shows a compositional bias: polar residues. The span at 743–757 (ENQHTEPEKAREKIE) shows a compositional bias: basic and acidic residues. Polar residues predominate over residues 762 to 771 (SDLSVPSSGE). The segment covering 772–782 (ENWEDDSEGEV) has biased composition (acidic residues). Over residues 849–859 (GSSTGSGSQIS) the composition is skewed to polar residues. The region spanning 873–972 (TDLSNRERLI…WGAEEEMKSF (100 aa)) is the CRM 4 domain.

As to quaternary structure, interacts with RNA. Part of large ribonucleo-protein particles that contain CAF1 and/or CAF2.

Its subcellular location is the plastid. The protein resides in the chloroplast stroma. Its function is as follows. Binds specific group II introns in chloroplasts and facilitates their splicing. Acts on both subgroup IIA and subgroup IIB introns. The substrates of the subgroup IIB also require the CRM domain proteins CAF1 or CAF2, with a simultaneous binding of CFM2 and CAF1 or CAF2. Can bind to and promote the splicing of the single group I intron in chloroplast tRNA transcript of trnL-UAA gene. The protein is CRM-domain containing factor CFM2, chloroplastic of Arabidopsis thaliana (Mouse-ear cress).